Reading from the N-terminus, the 211-residue chain is Protein-L-isoaspartate O-methyltransferase (211 aa).

Serine 60 is an active-site residue.

This sequence belongs to the methyltransferase superfamily. L-isoaspartyl/D-aspartyl protein methyltransferase family.

The protein localises to the cytoplasm. It carries out the reaction [protein]-L-isoaspartate + S-adenosyl-L-methionine = [protein]-L-isoaspartate alpha-methyl ester + S-adenosyl-L-homocysteine. Functionally, catalyzes the methyl esterification of L-isoaspartyl residues in peptides and proteins that result from spontaneous decomposition of normal L-aspartyl and L-asparaginyl residues. It plays a role in the repair and/or degradation of damaged proteins. The protein is Protein-L-isoaspartate O-methyltransferase of Pseudomonas paraeruginosa (strain DSM 24068 / PA7) (Pseudomonas aeruginosa (strain PA7)).